Here is a 409-residue protein sequence, read N- to C-terminus: Endoglucanase B (409 aa).

Substrate contacts are provided by residues histidine 61, 65–66 (WY), tyrosine 92, and histidine 127. Residue glutamate 165 is the Proton donor of the active site. Substrate is bound at residue tyrosine 228. Glutamate 254 acts as the Nucleophile in catalysis. Residues 260–261 (AT), tryptophan 288, and 293–295 (KDE) contribute to the substrate site. Residues 326-372 (IRESATTPPSDPTPPSDPDPGEPEPDPGEPDPTPPSDPGDYPAWDPN) are disordered. Over residues 334 to 343 (PSDPTPPSDP) the composition is skewed to pro residues. The segment covering 344 to 354 (DPGEPEPDPGE) has biased composition (acidic residues).

Belongs to the glycosyl hydrolase 5 (cellulase A) family.

It carries out the reaction Endohydrolysis of (1-&gt;4)-beta-D-glucosidic linkages in cellulose, lichenin and cereal beta-D-glucans.. This chain is Endoglucanase B (celB), found in Evansella cellulosilytica (strain ATCC 21833 / DSM 2522 / FERM P-1141 / JCM 9156 / N-4) (Bacillus cellulosilyticus).